Consider the following 351-residue polypeptide: Photosystem II D2 protein (351 aa).

The chain crosses the membrane as a helical span at residues 39-59 (TAYLAIGGWLTGTTFVTSWYT). A chlorophyll a-binding site is contributed by histidine 116. A helical membrane pass occupies residues 123-139 (GFMLRQFEIARLVGIRP). Positions 128 and 141 each coordinate pheophytin a. Residues 151 to 164 (VFVSVFLMYPLGQS) traverse the membrane as a helical segment. Histidine 196 is a chlorophyll a binding site. Residues 206–226 (GALLCAIHGATVENTLFEDGE) traverse the membrane as a helical segment. Residues histidine 213 and phenylalanine 260 each contribute to the a plastoquinone site. Histidine 213 is a binding site for Fe cation. Histidine 267 lines the Fe cation pocket. Residues 277–293 (GLWTSSIGIIGLALNLR) form a helical membrane-spanning segment.

It belongs to the reaction center PufL/M/PsbA/D family. In terms of assembly, PSII is composed of 1 copy each of membrane proteins PsbA, PsbB, PsbC, PsbD, PsbE, PsbF, PsbH, PsbI, PsbJ, PsbK, PsbL, PsbM, PsbT, PsbX, PsbY, PsbZ, Psb30/Ycf12, peripheral proteins PsbO, CyanoQ (PsbQ), PsbU, PsbV and a large number of cofactors. It forms dimeric complexes. It depends on The D1/D2 heterodimer binds P680, chlorophylls that are the primary electron donor of PSII, and subsequent electron acceptors. It shares a non-heme iron and each subunit binds pheophytin, quinone, additional chlorophylls, carotenoids and lipids. There is also a Cl(-1) ion associated with D1 and D2, which is required for oxygen evolution. The PSII complex binds additional chlorophylls, carotenoids and specific lipids. as a cofactor.

It is found in the cellular thylakoid membrane. The enzyme catalyses 2 a plastoquinone + 4 hnu + 2 H2O = 2 a plastoquinol + O2. Its function is as follows. Photosystem II (PSII) is a light-driven water:plastoquinone oxidoreductase that uses light energy to abstract electrons from H(2)O, generating O(2) and a proton gradient subsequently used for ATP formation. It consists of a core antenna complex that captures photons, and an electron transfer chain that converts photonic excitation into a charge separation. The D1/D2 (PsbA/PsbD) reaction center heterodimer binds P680, the primary electron donor of PSII as well as several subsequent electron acceptors. D2 is needed for assembly of a stable PSII complex. This is Photosystem II D2 protein from Parasynechococcus marenigrum (strain WH8102).